Reading from the N-terminus, the 244-residue chain is Lectin (244 aa).

Residues Thr-1–Lys-20 form a disordered region.

It belongs to the leguminous lectin family. In terms of assembly, homodimer. In contrast to other Lathyrus lectins which are tetramer of two alpha and two beta chains.

This Lathyrus sphaericus (Spring vetchling) protein is Lectin.